We begin with the raw amino-acid sequence, 114 residues long: Fluoride-specific ion channel FluC 1 (114 aa).

The next 4 membrane-spanning stretches (helical) occupy residues isoleucine 3 to phenylalanine 23, isoleucine 30 to leucine 50, leucine 55 to leucine 75, and phenylalanine 87 to isoleucine 107. The Na(+) site is built by glycine 63 and threonine 66.

The protein belongs to the fluoride channel Fluc/FEX (TC 1.A.43) family.

It localises to the cell inner membrane. It catalyses the reaction fluoride(in) = fluoride(out). Na(+) is not transported, but it plays an essential structural role and its presence is essential for fluoride channel function. Fluoride-specific ion channel. Important for reducing fluoride concentration in the cell, thus reducing its toxicity. This chain is Fluoride-specific ion channel FluC 1, found in Prochlorococcus marinus (strain NATL2A).